The primary structure comprises 608 residues: DNA mismatch repair protein MutL (608 aa).

It belongs to the DNA mismatch repair MutL/HexB family.

Its function is as follows. This protein is involved in the repair of mismatches in DNA. It is required for dam-dependent methyl-directed DNA mismatch repair. May act as a 'molecular matchmaker', a protein that promotes the formation of a stable complex between two or more DNA-binding proteins in an ATP-dependent manner without itself being part of a final effector complex. The protein is DNA mismatch repair protein MutL of Anaeromyxobacter dehalogenans (strain 2CP-C).